The following is a 141-amino-acid chain: Large ribosomal subunit protein uL11 (141 aa).

The protein belongs to the universal ribosomal protein uL11 family. As to quaternary structure, part of the ribosomal stalk of the 50S ribosomal subunit. Interacts with L10 and the large rRNA to form the base of the stalk. L10 forms an elongated spine to which L12 dimers bind in a sequential fashion forming a multimeric L10(L12)X complex. In terms of processing, one or more lysine residues are methylated.

In terms of biological role, forms part of the ribosomal stalk which helps the ribosome interact with GTP-bound translation factors. This chain is Large ribosomal subunit protein uL11, found in Dinoroseobacter shibae (strain DSM 16493 / NCIMB 14021 / DFL 12).